A 227-amino-acid chain; its full sequence is Cytochrome c oxidase subunit 2 (227 aa).

Over 1 to 14 (MAHPAQLGFQDAAS) the chain is Mitochondrial intermembrane. Residues 15 to 45 (PIMEELMYFHDHTLMIVFLISSLVLYIISLM) traverse the membrane as a helical segment. Residues 46–59 (LTTELTHTSTMDAQ) are Mitochondrial matrix-facing. A helical transmembrane segment spans residues 60 to 87 (EVETVWTILPAVILILIALPSLRILYMM). The Mitochondrial intermembrane segment spans residues 88 to 227 (DEITTPSLTL…HFEEWLLSTL (140 aa)). Positions 161, 196, 198, 200, 204, and 207 each coordinate Cu cation. E198 contributes to the Mg(2+) binding site.

Belongs to the cytochrome c oxidase subunit 2 family. In terms of assembly, component of the cytochrome c oxidase (complex IV, CIV), a multisubunit enzyme composed of 14 subunits. The complex is composed of a catalytic core of 3 subunits MT-CO1, MT-CO2 and MT-CO3, encoded in the mitochondrial DNA, and 11 supernumerary subunits COX4I, COX5A, COX5B, COX6A, COX6B, COX6C, COX7A, COX7B, COX7C, COX8 and NDUFA4, which are encoded in the nuclear genome. The complex exists as a monomer or a dimer and forms supercomplexes (SCs) in the inner mitochondrial membrane with NADH-ubiquinone oxidoreductase (complex I, CI) and ubiquinol-cytochrome c oxidoreductase (cytochrome b-c1 complex, complex III, CIII), resulting in different assemblies (supercomplex SCI(1)III(2)IV(1) and megacomplex MCI(2)III(2)IV(2)). Found in a complex with TMEM177, COA6, COX18, COX20, SCO1 and SCO2. Interacts with TMEM177 in a COX20-dependent manner. Interacts with COX20. Interacts with COX16. It depends on Cu cation as a cofactor.

The protein localises to the mitochondrion inner membrane. The catalysed reaction is 4 Fe(II)-[cytochrome c] + O2 + 8 H(+)(in) = 4 Fe(III)-[cytochrome c] + 2 H2O + 4 H(+)(out). Component of the cytochrome c oxidase, the last enzyme in the mitochondrial electron transport chain which drives oxidative phosphorylation. The respiratory chain contains 3 multisubunit complexes succinate dehydrogenase (complex II, CII), ubiquinol-cytochrome c oxidoreductase (cytochrome b-c1 complex, complex III, CIII) and cytochrome c oxidase (complex IV, CIV), that cooperate to transfer electrons derived from NADH and succinate to molecular oxygen, creating an electrochemical gradient over the inner membrane that drives transmembrane transport and the ATP synthase. Cytochrome c oxidase is the component of the respiratory chain that catalyzes the reduction of oxygen to water. Electrons originating from reduced cytochrome c in the intermembrane space (IMS) are transferred via the dinuclear copper A center (CU(A)) of subunit 2 and heme A of subunit 1 to the active site in subunit 1, a binuclear center (BNC) formed by heme A3 and copper B (CU(B)). The BNC reduces molecular oxygen to 2 water molecules using 4 electrons from cytochrome c in the IMS and 4 protons from the mitochondrial matrix. This chain is Cytochrome c oxidase subunit 2 (MT-CO2), found in Microcebus tavaratra (Northern rufous mouse lemur).